The following is a 342-amino-acid chain: Ribosomal RNA small subunit methyltransferase H (342 aa).

S-adenosyl-L-methionine-binding positions include 62–64 (GGH), aspartate 82, phenylalanine 108, aspartate 129, and glutamine 136. The tract at residues 280 to 319 (RHSKGQYPEDENLPMPPKRPRYFSKPKRVGPSKAEISHNP) is disordered. Positions 297-309 (KRPRYFSKPKRVG) are enriched in basic residues.

The protein belongs to the methyltransferase superfamily. RsmH family.

The protein resides in the cytoplasm. It catalyses the reaction cytidine(1402) in 16S rRNA + S-adenosyl-L-methionine = N(4)-methylcytidine(1402) in 16S rRNA + S-adenosyl-L-homocysteine + H(+). In terms of biological role, specifically methylates the N4 position of cytidine in position 1402 (C1402) of 16S rRNA. This Psychrobacter cryohalolentis (strain ATCC BAA-1226 / DSM 17306 / VKM B-2378 / K5) protein is Ribosomal RNA small subunit methyltransferase H.